The primary structure comprises 195 residues: Dihydroneopterin triphosphate diphosphatase (195 aa).

D73 serves as the catalytic Proton acceptor.

The protein belongs to the HAM1 NTPase family. Requires Mn(2+) as cofactor.

It catalyses the reaction 7,8-dihydroneopterin 3'-triphosphate + H2O = 7,8-dihydroneopterin 3'-phosphate + diphosphate + H(+). The protein operates within cofactor biosynthesis; tetrahydrofolate biosynthesis. Pyrophosphatase involved in the biosynthesis of tetrahydrofolate. Catalyzes the hydrolysis of dihydroneopterin triphosphate (DHNTP) to dihydroneopterin monophosphate (DHNMP) and pyrophosphate. Shows a strict substrate specificity. Has only weak activity with GTP, ITP, XTP and dTTP, and cannot use ATP, UTP, CTP, NAD(+), NADH, diadenosine triphosphate, diadenosine tetraphosphate, ADP-ribose and UDP-glucose. The sequence is that of Dihydroneopterin triphosphate diphosphatase from Limosilactobacillus reuteri (strain DSM 20016) (Lactobacillus reuteri).